Consider the following 148-residue polypeptide: Cytochrome c oxidase subunit 4, mitochondrial (148 aa).

Residues 1–24 (MFALRSIRSATKAFQTTSIVSQRG) constitute a mitochondrion transit peptide.

As to quaternary structure, slime mold cytochrome c oxidase consists of at least seven different polypeptides species, subunits I, II, III, IV, V, VI, and VIIe/s in order of MW.

Its subcellular location is the mitochondrion inner membrane. The enzyme catalyses 4 Fe(II)-[cytochrome c] + O2 + 8 H(+)(in) = 4 Fe(III)-[cytochrome c] + 2 H2O + 4 H(+)(out). This protein is one of the nuclear-coded polypeptide chains of cytochrome c oxidase, the terminal oxidase in mitochondrial electron transport. The polypeptide is Cytochrome c oxidase subunit 4, mitochondrial (cxdA) (Dictyostelium discoideum (Social amoeba)).